The following is a 462-amino-acid chain: Chitinase 1 (462 aa).

A signal peptide spans 1–17 (MILNLIILLAISIVASA). Positions 18–291 (SNIAAYWGQN…NQLYQALSGS (274 aa)) constitute a GH18 domain. Asn57 carries N-linked (GlcNAc...) asparagine glycosylation. Glu147 acts as the Proton donor in catalysis.

The protein belongs to the glycosyl hydrolase 18 family. Chitinase class III subfamily.

The protein localises to the secreted. The catalysed reaction is Random endo-hydrolysis of N-acetyl-beta-D-glucosaminide (1-&gt;4)-beta-linkages in chitin and chitodextrins.. The polypeptide is Chitinase 1 (CHT1) (Candida albicans (Yeast)).